A 248-amino-acid polypeptide reads, in one-letter code: MFNSPLEQFEILPLLSFGANLFDFSITNAMLTTCVSLSFFLFLFYCLFSYGLNSFPTRWQLVLEGLYTSTAGLVWDSVGPRRPKVFPFLFVIFSFILISNVQGLVPYSFTITSHLIQTMVLALTVFIGVIIIVLAHGFHMLSLFLPGGTSIVLAFLLVPIEIVSYVFKPLSLAVRLFANMMAGHTLLKVIAAVAWAMMGSGGLLLIAHIVPLGVLVILFGLELAVALIQAYVFTILSCIYINDAIVLH.

The next 7 helical transmembrane spans lie at 29-49, 85-105, 115-135, 143-163, 176-196, 201-221, and 227-247; these read AMLT…CLFS, VFPF…QGLV, LIQT…IVLA, LFLP…IEIV, LFAN…VAWA, GGLL…LFGL, and LIQA…AIVL.

The protein belongs to the ATPase A chain family. In terms of assembly, F-type ATPases have 2 components, CF(1) - the catalytic core - and CF(0) - the membrane proton channel. CF(1) has five subunits: alpha(3), beta(3), gamma(1), delta(1), epsilon(1). CF(0) has three main subunits: a, b and c.

Its subcellular location is the mitochondrion inner membrane. Its function is as follows. Mitochondrial membrane ATP synthase (F(1)F(0) ATP synthase or Complex V) produces ATP from ADP in the presence of a proton gradient across the membrane which is generated by electron transport complexes of the respiratory chain. F-type ATPases consist of two structural domains, F(1) - containing the extramembraneous catalytic core and F(0) - containing the membrane proton channel, linked together by a central stalk and a peripheral stalk. During catalysis, ATP synthesis in the catalytic domain of F(1) is coupled via a rotary mechanism of the central stalk subunits to proton translocation. Key component of the proton channel; it may play a direct role in the translocation of protons across the membrane. In Pylaiella littoralis (Seaweed), this protein is ATP synthase subunit a (ATP6).